The sequence spans 114 residues: Macrophage migration inhibitory factor homolog (114 aa).

Pro-2 serves as the catalytic Proton acceptor; via imino nitrogen. Residues Lys-33 and Ile-65 each contribute to the substrate site.

It belongs to the MIF family.

It is found in the secreted. The enzyme catalyses L-dopachrome = 5,6-dihydroxyindole-2-carboxylate. It catalyses the reaction 3-phenylpyruvate = enol-phenylpyruvate. In terms of biological role, tautomerization of the methyl ester of L-dopachrome. Inhibits migration of human peripheral blood mononuclear cells. This chain is Macrophage migration inhibitory factor homolog, found in Trichinella spiralis (Trichina worm).